A 317-amino-acid chain; its full sequence is Pantothenate kinase (317 aa).

ATP is bound at residue 95–102 (GSVAVGKS).

This sequence belongs to the prokaryotic pantothenate kinase family.

It localises to the cytoplasm. It catalyses the reaction (R)-pantothenate + ATP = (R)-4'-phosphopantothenate + ADP + H(+). It functions in the pathway cofactor biosynthesis; coenzyme A biosynthesis; CoA from (R)-pantothenate: step 1/5. The polypeptide is Pantothenate kinase (Myxococcus xanthus (strain DK1622)).